The primary structure comprises 212 residues: Large ribosomal subunit protein uL4 (212 aa).

A disordered region spans residues 45 to 71; the sequence is RQGNASTKTRAEVRGGGRKPWRQKGTG. Basic residues predominate over residues 60–71; the sequence is GGRKPWRQKGTG.

This sequence belongs to the universal ribosomal protein uL4 family. Part of the 50S ribosomal subunit.

Functionally, one of the primary rRNA binding proteins, this protein initially binds near the 5'-end of the 23S rRNA. It is important during the early stages of 50S assembly. It makes multiple contacts with different domains of the 23S rRNA in the assembled 50S subunit and ribosome. In terms of biological role, forms part of the polypeptide exit tunnel. The protein is Large ribosomal subunit protein uL4 of Nostoc punctiforme (strain ATCC 29133 / PCC 73102).